We begin with the raw amino-acid sequence, 476 residues long: Oogenesin-2 (476 aa).

The stretch at 97–121 (RCKLREITLSHDLVVVWAGSHEVEG) is one LRR 1; degenerate repeat. One copy of the LRR 2; degenerate repeat lies at 176–200 (HLHCRKLKIYGLTKAAVIEMFKIVH). Residues 201–226 (AEYIEDLELSCLCLEYLDFLNPYLKQ) form an LRR 3; degenerate repeat. The stretch at 227 to 264 (MSNLLSLTLDEIIYTLNIDDYRNLNEEKVITVISHLPT) is one LRR 4; degenerate repeat. 4 LRR repeats span residues 265–285 (FHHL…LRCL), 286–317 (KKPL…FELR), 342–369 (RHTL…ALSQ), and 370–394 (CYQL…LLHH).

This sequence belongs to the PRAME family. As to expression, expressed in ovary, specifically in oocytes. Detected in follicles with two layers of granulosa cells, and are present in early as well as large antral follicles.

The protein is Oogenesin-2 of Mus musculus (Mouse).